The primary structure comprises 849 residues: Serrate RNA effector molecule homolog A (849 aa).

Disordered regions lie at residues 1 to 90 (MADS…HGSD) and 276 to 409 (KREA…PRPL). 3 stretches are compositionally biased toward basic and acidic residues: residues 8–73 (YDRR…RHDL), 276–306 (KREAAKKEEAPVTETEKVVTEEKEAPAKPEN), and 314–342 (EKPVKPQEEEEKKVEKKVEKEEPERETRK). Residues 354-364 (SDDGSDSESDT) show a composition bias toward acidic residues. The segment covering 381 to 405 (RAEETPKKEEDTEKQKEKQKEDTVK) has biased composition (basic and acidic residues).

Belongs to the ARS2 family. In terms of assembly, interacts ncbp1/cbp80.

It is found in the nucleus. It localises to the nucleoplasm. The protein localises to the cytoplasm. Functionally, acts as a mediator between the cap-binding complex (CBC) and the primary microRNAs (miRNAs) processing machinery during cell proliferation. Contributes to the stability and delivery of capped primary miRNA transcripts to the primary miRNA processing complex, thereby playing a role in RNA-mediated gene silencing (RNAi) by miRNAs. The polypeptide is Serrate RNA effector molecule homolog A (srrt-a) (Xenopus laevis (African clawed frog)).